The sequence spans 337 residues: Heme A synthase (337 aa).

A run of 5 helical transmembrane segments spans residues 6–26 (ITKW…IGGI), 87–107 (FIHR…LIYF), 119–139 (LPYI…WYMV), 154–174 (LAFH…QLIK), and 192–212 (LIFS…GALV). His256 is a heme binding site. 3 consecutive transmembrane segments (helical) span residues 258 to 278 (LGGY…LKIE), 285 to 305 (IAYF…ITLL), and 308 to 328 (VPII…SIII). His316 is a binding site for heme.

Belongs to the COX15/CtaA family. Type 2 subfamily. In terms of assembly, interacts with CtaB. The cofactor is heme b.

The protein resides in the cell membrane. It catalyses the reaction Fe(II)-heme o + 2 A + H2O = Fe(II)-heme a + 2 AH2. The protein operates within porphyrin-containing compound metabolism; heme A biosynthesis; heme A from heme O: step 1/1. Catalyzes the conversion of heme O to heme A by two successive hydroxylations of the methyl group at C8. The first hydroxylation forms heme I, the second hydroxylation results in an unstable dihydroxymethyl group, which spontaneously dehydrates, resulting in the formyl group of heme A. The chain is Heme A synthase from Rickettsia massiliae (strain Mtu5).